The chain runs to 522 residues: GMP synthase [glutamine-hydrolyzing] (522 aa).

The Glutamine amidotransferase type-1 domain maps to 5-204; sequence YILIIDFGSQ…VKNICNYTNV (200 aa). C82 (nucleophile) is an active-site residue. Active-site residues include H178 and E180. Residues 205 to 397 enclose the GMPS ATP-PPase domain; the sequence is IKYSLSIRKI…IGIPKEIIFR (193 aa). 232 to 238 is a binding site for ATP; it reads SGGIDSF.

As to quaternary structure, homodimer.

The catalysed reaction is XMP + L-glutamine + ATP + H2O = GMP + L-glutamate + AMP + diphosphate + 2 H(+). It functions in the pathway purine metabolism; GMP biosynthesis; GMP from XMP (L-Gln route): step 1/1. In terms of biological role, catalyzes the synthesis of GMP from XMP. This Wigglesworthia glossinidia brevipalpis protein is GMP synthase [glutamine-hydrolyzing].